Reading from the N-terminus, the 485-residue chain is GTPase Obg (485 aa).

Positions 2–159 (PRFVDRVVIH…RELTLELKTV (158 aa)) constitute an Obg domain. The 182-residue stretch at 160–341 (ADVGLIGFPS…FIFALWDMVR (182 aa)) folds into the OBG-type G domain. GTP-binding positions include 166 to 173 (GFPSAGKS), 191 to 195 (FTTLV), 212 to 215 (DVPG), 292 to 295 (NKID), and 322 to 324 (STV). 2 residues coordinate Mg(2+): serine 173 and threonine 193. Residues 359-437 (PIAVDETGFS…IGDMTFDWEP (79 aa)) form the OCT domain. A disordered region spans residues 439 to 485 (TPAGVDVQMSGRGTDTRLEQTDRVSAAERKIARRERRQSTDEPGGEE). The segment covering 452-468 (TDTRLEQTDRVSAAERK) has biased composition (basic and acidic residues).

This sequence belongs to the TRAFAC class OBG-HflX-like GTPase superfamily. OBG GTPase family. As to quaternary structure, monomer. Mg(2+) is required as a cofactor.

The protein localises to the cytoplasm. An essential GTPase which binds GTP, GDP and possibly (p)ppGpp with moderate affinity, with high nucleotide exchange rates and a fairly low GTP hydrolysis rate. Plays a role in control of the cell cycle, stress response, ribosome biogenesis and in those bacteria that undergo differentiation, in morphogenesis control. This chain is GTPase Obg, found in Mycobacterium sp. (strain MCS).